Reading from the N-terminus, the 623-residue chain is UvrABC system protein C (623 aa).

One can recognise a GIY-YIG domain in the interval Phe12–Ile91. Residues Ser201–Ile236 enclose the UVR domain. A disordered region spans residues Pro604–Ala623.

It belongs to the UvrC family. In terms of assembly, interacts with UvrB in an incision complex.

It localises to the cytoplasm. Its function is as follows. The UvrABC repair system catalyzes the recognition and processing of DNA lesions. UvrC both incises the 5' and 3' sides of the lesion. The N-terminal half is responsible for the 3' incision and the C-terminal half is responsible for the 5' incision. In Solibacter usitatus (strain Ellin6076), this protein is UvrABC system protein C.